The following is a 71-amino-acid chain: Beta-defensin 25 (71 aa).

Positions 1-22 are cleaved as a signal peptide; the sequence is MAKWILLIVALLVLSHVPPGST. 3 cysteine pairs are disulfide-bonded: Cys-27/Cys-54, Cys-34/Cys-48, and Cys-38/Cys-55.

It belongs to the beta-defensin family.

It localises to the secreted. Functionally, has antibacterial activity. The polypeptide is Beta-defensin 25 (Defb25) (Mus musculus (Mouse)).